A 224-amino-acid polypeptide reads, in one-letter code: Pyridoxine/pyridoxamine 5'-phosphate oxidase (224 aa).

FMN is bound by residues Arg69–Lys74, Phe83–Thr84, Arg89, Lys90, and Gln112. Position 74 (Lys74) interacts with substrate. Substrate contacts are provided by Tyr130, Arg134, and Ser138. FMN-binding positions include Gln148–Ser149 and Trp194. Arg200–His202 contributes to the substrate binding site. Residue Arg204 coordinates FMN.

The protein belongs to the pyridoxamine 5'-phosphate oxidase family. In terms of assembly, homodimer. FMN serves as cofactor.

It carries out the reaction pyridoxamine 5'-phosphate + O2 + H2O = pyridoxal 5'-phosphate + H2O2 + NH4(+). It catalyses the reaction pyridoxine 5'-phosphate + O2 = pyridoxal 5'-phosphate + H2O2. The protein operates within cofactor metabolism; pyridoxal 5'-phosphate salvage; pyridoxal 5'-phosphate from pyridoxamine 5'-phosphate: step 1/1. It functions in the pathway cofactor metabolism; pyridoxal 5'-phosphate salvage; pyridoxal 5'-phosphate from pyridoxine 5'-phosphate: step 1/1. Its function is as follows. Catalyzes the oxidation of either pyridoxine 5'-phosphate (PNP) or pyridoxamine 5'-phosphate (PMP) into pyridoxal 5'-phosphate (PLP). In Acidothermus cellulolyticus (strain ATCC 43068 / DSM 8971 / 11B), this protein is Pyridoxine/pyridoxamine 5'-phosphate oxidase.